Reading from the N-terminus, the 534-residue chain is NAD(P)H-quinone oxidoreductase chain 4 (534 aa).

Transmembrane regions (helical) follow at residues 12 to 32 (FPWL…IPFF), 44 to 64 (FALS…INGF), 94 to 114 (ISMP…LAAW), 120 to 140 (PKLF…VFAV), 144 to 164 (LLFF…LAIW), 176 to 196 (FIIY…AMGF), 220 to 240 (ILCY…VPLH), 251 to 271 (TAPV…YALL), 285 to 305 (FAPL…LTSF), 314 to 334 (IAYS…SFSS), 340 to 360 (AMLQ…LVGA), 384 to 404 (FALW…SGFV), 425 to 445 (VIMA…LLSM), and 472 to 492 (VYII…PRLV).

This sequence belongs to the complex I subunit 4 family.

Its subcellular location is the cellular thylakoid membrane. It carries out the reaction a plastoquinone + NADH + (n+1) H(+)(in) = a plastoquinol + NAD(+) + n H(+)(out). The enzyme catalyses a plastoquinone + NADPH + (n+1) H(+)(in) = a plastoquinol + NADP(+) + n H(+)(out). In terms of biological role, NDH-1 shuttles electrons from NAD(P)H, via FMN and iron-sulfur (Fe-S) centers, to quinones in the respiratory chain. The immediate electron acceptor for the enzyme in this species is believed to be plastoquinone. Couples the redox reaction to proton translocation (for every two electrons transferred, four hydrogen ions are translocated across the cytoplasmic membrane), and thus conserves the redox energy in a proton gradient. This Prochlorococcus marinus (strain MIT 9312) protein is NAD(P)H-quinone oxidoreductase chain 4.